The sequence spans 383 residues: 1-deoxy-D-xylulose 5-phosphate reductoisomerase (383 aa).

Positions 10, 11, 12, 13, and 123 each coordinate NADPH. K124 serves as a coordination point for 1-deoxy-D-xylulose 5-phosphate. E125 contributes to the NADPH binding site. Residue D149 coordinates Mn(2+). Positions 150, 151, 175, and 198 each coordinate 1-deoxy-D-xylulose 5-phosphate. E151 contacts Mn(2+). G204 is a binding site for NADPH. S211, N216, K217, and E220 together coordinate 1-deoxy-D-xylulose 5-phosphate. E220 is a binding site for Mn(2+).

It belongs to the DXR family. Requires Mg(2+) as cofactor. The cofactor is Mn(2+).

It carries out the reaction 2-C-methyl-D-erythritol 4-phosphate + NADP(+) = 1-deoxy-D-xylulose 5-phosphate + NADPH + H(+). The protein operates within isoprenoid biosynthesis; isopentenyl diphosphate biosynthesis via DXP pathway; isopentenyl diphosphate from 1-deoxy-D-xylulose 5-phosphate: step 1/6. Its function is as follows. Catalyzes the NADPH-dependent rearrangement and reduction of 1-deoxy-D-xylulose-5-phosphate (DXP) to 2-C-methyl-D-erythritol 4-phosphate (MEP). The protein is 1-deoxy-D-xylulose 5-phosphate reductoisomerase of Desulfosudis oleivorans (strain DSM 6200 / JCM 39069 / Hxd3) (Desulfococcus oleovorans).